The following is a 257-amino-acid chain: Cytosolic Fe-S cluster assembly factor NUBP2 homolog (257 aa).

An ATP-binding site is contributed by 14-21 (GKGGVGKS). [4Fe-4S] cluster-binding residues include C188 and C191.

This sequence belongs to the Mrp/NBP35 ATP-binding proteins family. NUBP2/CFD1 subfamily. As to quaternary structure, heterotetramer of 2 NUBP1 and 2 NUBP2 chains. It depends on [4Fe-4S] cluster as a cofactor.

The protein localises to the cytoplasm. In terms of biological role, component of the cytosolic iron-sulfur (Fe/S) protein assembly (CIA) machinery. Required for maturation of extramitochondrial Fe-S proteins. The NUBP1-NUBP2 heterotetramer forms a Fe-S scaffold complex, mediating the de novo assembly of an Fe-S cluster and its transfer to target apoproteins. This chain is Cytosolic Fe-S cluster assembly factor NUBP2 homolog, found in Culex quinquefasciatus (Southern house mosquito).